Consider the following 88-residue polypeptide: Small ribosomal subunit protein bS20 (88 aa).

The protein belongs to the bacterial ribosomal protein bS20 family.

Its function is as follows. Binds directly to 16S ribosomal RNA. The polypeptide is Small ribosomal subunit protein bS20 (Maricaulis maris (strain MCS10) (Caulobacter maris)).